Reading from the N-terminus, the 311-residue chain is MPEQGPRMNGFSLGELCWLFCCPPCPSRIAAKLAFLPPEPTYTVREMEAPASTAQQPPREEGSGEPAACSLHLSERADWQYSQRELDAVEVFRWRTERGSFLGCMFVRCSPGSRYTLLFSHGNAVDLGQMCSFYIGLGTRINCNIFSYDYSGYGVSSGKPSEKNLYADIEAAWHALRTRYGVTPENIILYGQSIGTVPTVDLASRYECAAVILHSPLMSGLRVAFPDTRKTYCFDAFPSIDKISKVTSPVLIIHGTEDEVIDFSHGLAMYERCPRAVEPLWVEGAGHNDIELYAQYLERLKQFISHELPNS.

A disordered region spans residues 48 to 67 (EAPASTAQQPPREEGSGEPA). Active-site charge relay system residues include Ser193, Asp258, and His287.

This sequence belongs to the AB hydrolase superfamily. ABHD17 family. In terms of processing, palmitoylated on cysteine residues located in a cysteine cluster at the N-terminus which promotes membrane localization.

Its subcellular location is the recycling endosome membrane. The protein localises to the cell projection. It is found in the dendritic spine. It localises to the postsynaptic density membrane. The enzyme catalyses S-hexadecanoyl-L-cysteinyl-[protein] + H2O = L-cysteinyl-[protein] + hexadecanoate + H(+). Hydrolyzes fatty acids from S-acylated cysteine residues in proteins. Has depalmitoylating activity towards NRAS. The protein is Alpha/beta hydrolase domain-containing protein 17C of Xenopus laevis (African clawed frog).